Reading from the N-terminus, the 447-residue chain is Putative short-chain fatty acid transporter (447 aa).

Transmembrane regions (helical) follow at residues 17–37 (LPDP…CAWG), 49–69 (MWGN…LIVV), 98–118 (VVLV…FGLV), 136–156 (YALL…GFSG), 188–208 (TLFS…LPFI), 252–272 (FLAY…FYKN), 284–304 (IFLI…RAII), 321–341 (AGVQ…EFFI), 359–379 (FINF…PFVI), 402–422 (WMNM…GLGV), and 427–447 (GFCM…LYFL).

The protein resides in the cell inner membrane. Its function is as follows. May be responsible for the uptake of short-chain fatty acids. This chain is Putative short-chain fatty acid transporter (atoE), found in Haemophilus influenzae (strain ATCC 51907 / DSM 11121 / KW20 / Rd).